The chain runs to 316 residues: Protoheme IX farnesyltransferase (316 aa).

9 helical membrane passes run 28 to 48 (IIPLLLITTAAAMEIASKGQV), 50 to 70 (PLLLFLTLLGGTLAAAAAQTL), 99 to 119 (HALIFALVLASLSLALFVFFV), 122 to 142 (LSGFLAMTGIAFYMLIYTHLL), 150 to 170 (IVIGGAAGSIPPLVGWAAVTG), 178 to 198 (ILFAIIFLWTPPHFWALALMI), 223 to 243 (IWLYTLIVVPFTFLLIYPLAA), 244 to 264 (CGVVYGVAALVLGFVFLKKAW), and 293 to 313 (AMVIDSLPMTSHLIATIASLF).

The protein belongs to the UbiA prenyltransferase family. Protoheme IX farnesyltransferase subfamily.

It localises to the cell inner membrane. The catalysed reaction is heme b + (2E,6E)-farnesyl diphosphate + H2O = Fe(II)-heme o + diphosphate. The protein operates within porphyrin-containing compound metabolism; heme O biosynthesis; heme O from protoheme: step 1/1. Its function is as follows. Converts heme B (protoheme IX) to heme O by substitution of the vinyl group on carbon 2 of heme B porphyrin ring with a hydroxyethyl farnesyl side group. The sequence is that of Protoheme IX farnesyltransferase from Microcystis aeruginosa (strain NIES-843 / IAM M-2473).